The sequence spans 229 residues: Urease accessory protein UreF (229 aa).

Belongs to the UreF family. As to quaternary structure, ureD, UreF and UreG form a complex that acts as a GTP-hydrolysis-dependent molecular chaperone, activating the urease apoprotein by helping to assemble the nickel containing metallocenter of UreC. The UreE protein probably delivers the nickel.

The protein resides in the cytoplasm. Required for maturation of urease via the functional incorporation of the urease nickel metallocenter. The chain is Urease accessory protein UreF from Ralstonia pickettii (strain 12J).